The chain runs to 249 residues: Deoxyribose-phosphate aldolase (249 aa).

Residue D105 is the Proton donor/acceptor of the active site. The Schiff-base intermediate with acetaldehyde role is filled by K168. The active-site Proton donor/acceptor is the K216.

The protein belongs to the DeoC/FbaB aldolase family. DeoC type 1 subfamily.

The protein localises to the cytoplasm. The catalysed reaction is 2-deoxy-D-ribose 5-phosphate = D-glyceraldehyde 3-phosphate + acetaldehyde. Its pathway is carbohydrate degradation; 2-deoxy-D-ribose 1-phosphate degradation; D-glyceraldehyde 3-phosphate and acetaldehyde from 2-deoxy-alpha-D-ribose 1-phosphate: step 2/2. In terms of biological role, catalyzes a reversible aldol reaction between acetaldehyde and D-glyceraldehyde 3-phosphate to generate 2-deoxy-D-ribose 5-phosphate. The sequence is that of Deoxyribose-phosphate aldolase from Corynebacterium jeikeium (strain K411).